A 461-amino-acid chain; its full sequence is V-type ATP synthase beta chain (461 aa).

This sequence belongs to the ATPase alpha/beta chains family.

Produces ATP from ADP in the presence of a proton gradient across the membrane. The V-type beta chain is a regulatory subunit. The protein is V-type ATP synthase beta chain of Clostridium botulinum (strain 657 / Type Ba4).